The chain runs to 355 residues: Heat-inducible transcription repressor HrcA (355 aa).

The protein belongs to the HrcA family.

Its function is as follows. Negative regulator of class I heat shock genes (grpE-dnaK-dnaJ and groELS operons). Prevents heat-shock induction of these operons. This Nitratidesulfovibrio vulgaris (strain DP4) (Desulfovibrio vulgaris) protein is Heat-inducible transcription repressor HrcA.